Here is an 89-residue protein sequence, read N- to C-terminus: Protein FAM25A (89 aa).

The protein belongs to the FAM25 family.

This is Protein FAM25A from Mus musculus (Mouse).